Consider the following 330-residue polypeptide: Aspartate--ammonia ligase (330 aa).

The protein belongs to the class-II aminoacyl-tRNA synthetase family. AsnA subfamily.

Its subcellular location is the cytoplasm. It carries out the reaction L-aspartate + NH4(+) + ATP = L-asparagine + AMP + diphosphate + H(+). It participates in amino-acid biosynthesis; L-asparagine biosynthesis; L-asparagine from L-aspartate (ammonia route): step 1/1. The chain is Aspartate--ammonia ligase from Streptococcus equi subsp. equi (strain 4047).